We begin with the raw amino-acid sequence, 72 residues long: Large ribosomal subunit protein bL28 (72 aa).

This sequence belongs to the bacterial ribosomal protein bL28 family.

This chain is Large ribosomal subunit protein bL28, found in Chlorobium phaeovibrioides (strain DSM 265 / 1930) (Prosthecochloris vibrioformis (strain DSM 265)).